Consider the following 295-residue polypeptide: 33 kDa chaperonin (295 aa).

2 disulfide bridges follow: Cys237–Cys239 and Cys270–Cys273.

The protein belongs to the HSP33 family. Under oxidizing conditions two disulfide bonds are formed involving the reactive cysteines. Under reducing conditions zinc is bound to the reactive cysteines and the protein is inactive.

It localises to the cytoplasm. Functionally, redox regulated molecular chaperone. Protects both thermally unfolding and oxidatively damaged proteins from irreversible aggregation. Plays an important role in the bacterial defense system toward oxidative stress. The protein is 33 kDa chaperonin of Geobacillus sp. (strain WCH70).